We begin with the raw amino-acid sequence, 532 residues long: BEL1-like homeodomain protein 6 (532 aa).

Residues 144–160 form an SR/KY domain region; it reads SKYLKAAQQLLDEAVNV. The segment at 170 to 203 is disordered; it reads EGDKNNENPQEPNQSTQDSSTNPPADISQSERQE. A compositionally biased stretch (polar residues) spans 176 to 197; it reads ENPQEPNQSTQDSSTNPPADIS. Residues 200–271 form a BELL domain region; the sequence is ERQEMQSKLT…SLRDAISGQI (72 aa). Residues 314–376 constitute a DNA-binding region (homeobox); that stretch reads AWRPQRGLPE…NARVRLWKPM (63 aa). A disordered region spans residues 385–434; that stretch reads FTENDSNSSSENTPKMSEIGPVAADDEDRAREFSQDQTKPDHGHGYGEET. Over residues 412-434 the composition is skewed to basic and acidic residues; sequence DRAREFSQDQTKPDHGHGYGEET.

Belongs to the TALE/BELL homeobox family. In terms of assembly, may form heterodimeric complexes with TALE/KNOX proteins. Interacts with OFP2, OFP4, and OFP5.

It is found in the nucleus. The chain is BEL1-like homeodomain protein 6 (BLH6) from Arabidopsis thaliana (Mouse-ear cress).